The sequence spans 235 residues: tRNA (guanine-N(1)-)-methyltransferase (235 aa).

S-adenosyl-L-methionine-binding positions include glycine 114 and 134–139 (IGDYIL).

This sequence belongs to the RNA methyltransferase TrmD family. In terms of assembly, homodimer.

It localises to the cytoplasm. The enzyme catalyses guanosine(37) in tRNA + S-adenosyl-L-methionine = N(1)-methylguanosine(37) in tRNA + S-adenosyl-L-homocysteine + H(+). Functionally, specifically methylates guanosine-37 in various tRNAs. The protein is tRNA (guanine-N(1)-)-methyltransferase of Ehrlichia canis (strain Jake).